Consider the following 369-residue polypeptide: 3 beta-hydroxysteroid dehydrogenase type 7 (369 aa).

Tyr-159 acts as the Proton acceptor in catalysis. Lys-163 is a binding site for NAD(+). The next 2 helical transmembrane spans lie at Leu-289–Leu-309 and Leu-312–Ser-334.

Belongs to the 3-beta-HSD family. Predominantly expressed in liver.

It is found in the endoplasmic reticulum membrane. The catalysed reaction is 7alpha-hydroxycholesterol + NAD(+) = 7alpha-hydroxycholest-4-en-3-one + NADH + H(+). It carries out the reaction 7alpha,25-dihydroxycholesterol + NAD(+) = 7alpha,25-dihydroxy-4-cholesten-3-one + NADH + H(+). It catalyses the reaction (25R)-cholest-5-en-3beta,7alpha,26-triol + NAD(+) = (25R)-7alpha,26-dihydroxycholest-4-en-3-one + NADH + H(+). The enzyme catalyses (24S)-7alpha-dihydroxycholesterol + NAD(+) = (24S)-7alpha,24-dihydroxycholest-4-en-3-one + NADH + H(+). It participates in lipid metabolism; steroid biosynthesis. In terms of biological role, the 3-beta-HSD enzymatic system plays a crucial role in the biosynthesis of all classes of hormonal steroids. HSD VII is active against four 7-alpha-hydroxylated sterols. Does not metabolize several different C(19/21) steroids as substrates. Involved in bile acid synthesis. Plays a key role in cell positioning and movement in lymphoid tissues by mediating degradation of 7-alpha,25-dihydroxycholesterol (7-alpha,25-OHC): 7-alpha,25-OHC acts as a ligand for the G protein-coupled receptor GPR183/EBI2, a chemotactic receptor for a number of lymphoid cells. This chain is 3 beta-hydroxysteroid dehydrogenase type 7, found in Mus musculus (Mouse).